A 150-amino-acid polypeptide reads, in one-letter code: Helix-loop-helix protein hlh-12 (150 aa).

Positions 1-24 (MAKKPRVTKLNTDRRSRANERERQ) are disordered. Residues 11–24 (NTDRRSRANERERQ) show a composition bias toward basic and acidic residues. The segment at 13–26 (DRRSRANERERQRV) is basic motif. A bHLH domain is found at 13 to 65 (DRRSRANERERQRVSEMNGMFDVLLNLLPPSHFKTRLSRVQILREATSYIIRL). The interval 27–65 (SEMNGMFDVLLNLLPPSHFKTRLSRVQILREATSYIIRL) is helix-loop-helix motif.

Forms a heterodimer with helix-loop-helix protein hlh-2.

Its subcellular location is the nucleus. Functionally, transcription factor which binds the E box motif 5'-GCAGGTG-3'. Involved in migration of the gonadal leader cells; distal tip cells (DTCs) in hermaphrodites, and linker cells in males. Positively regulates expression of alpha integrin ina-1 and ADAMTS protease gon-1. This chain is Helix-loop-helix protein hlh-12, found in Caenorhabditis elegans.